A 115-amino-acid chain; its full sequence is Protein translation factor SUI1 homolog (115 aa).

The protein belongs to the SUI1 family.

Probably involved in translation. The polypeptide is Protein translation factor SUI1 homolog (TIF) (Zea mays (Maize)).